The primary structure comprises 458 residues: tRNA modification GTPase MnmE (458 aa).

Residues Arg-28, Glu-85, and Lys-124 each coordinate (6S)-5-formyl-5,6,7,8-tetrahydrofolate. A TrmE-type G domain is found at 220-381; that stretch reads GMNVVIAGRP…LKEHLKAVMG (162 aa). Asn-230 provides a ligand contact to K(+). GTP is bound by residues 230–235, 249–255, and 274–277; these read NAGKSS, TDIEGTT, and DTAG. Residue Ser-234 participates in Mg(2+) binding. Residues Thr-249, Ile-251, and Thr-254 each contribute to the K(+) site. Residue Thr-255 participates in Mg(2+) binding. Lys-458 serves as a coordination point for (6S)-5-formyl-5,6,7,8-tetrahydrofolate.

This sequence belongs to the TRAFAC class TrmE-Era-EngA-EngB-Septin-like GTPase superfamily. TrmE GTPase family. Homodimer. Heterotetramer of two MnmE and two MnmG subunits. The cofactor is K(+).

Its subcellular location is the cytoplasm. Functionally, exhibits a very high intrinsic GTPase hydrolysis rate. Involved in the addition of a carboxymethylaminomethyl (cmnm) group at the wobble position (U34) of certain tRNAs, forming tRNA-cmnm(5)s(2)U34. This is tRNA modification GTPase MnmE from Chromohalobacter salexigens (strain ATCC BAA-138 / DSM 3043 / CIP 106854 / NCIMB 13768 / 1H11).